We begin with the raw amino-acid sequence, 155 residues long: S-ribosylhomocysteine lyase (155 aa).

Fe cation contacts are provided by His-54, His-58, and Cys-122.

Belongs to the LuxS family. As to quaternary structure, homodimer. The cofactor is Fe cation.

It catalyses the reaction S-(5-deoxy-D-ribos-5-yl)-L-homocysteine = (S)-4,5-dihydroxypentane-2,3-dione + L-homocysteine. Involved in the synthesis of autoinducer 2 (AI-2) which is secreted by bacteria and is used to communicate both the cell density and the metabolic potential of the environment. The regulation of gene expression in response to changes in cell density is called quorum sensing. Catalyzes the transformation of S-ribosylhomocysteine (RHC) to homocysteine (HC) and 4,5-dihydroxy-2,3-pentadione (DPD). This is S-ribosylhomocysteine lyase from Deinococcus geothermalis (strain DSM 11300 / CIP 105573 / AG-3a).